Reading from the N-terminus, the 194-residue chain is Factor in the germline alpha (194 aa).

In terms of domain architecture, bHLH spans 59–111 (ERRRVANAKERERIKNLNRGFAKLKALVPFLPQSRKPSKVDILKGATEYIQIL). Basic and acidic residues predominate over residues 121 to 137 (SEKQSPEEQTHSGRPSD). The interval 121-163 (SEKQSPEEQTHSGRPSDPHVSSTRELLGNATQPTSCASGLKKE) is disordered. The span at 139 to 157 (HVSSTRELLGNATQPTSCA) shows a compositional bias: polar residues.

In terms of assembly, heterodimer with TCF3/isoform E12. In terms of tissue distribution, expressed only in the oocytes within the ovary and at lower level in the testis. Found in the resting oocytes of the primordial follicle cells, at the periphery of the ovary and in the hilar region. Also detected in growing oocytes, but at lower levels.

It is found in the nucleus. Its function is as follows. Germ-line specific transcription factor implicated in postnatal oocyte-specific gene expression. Plays a key regulatory role in the expression of multiple oocyte-specific genes, including those that initiate folliculogenesis and those that encode the zona pellucida (ZP1, ZP2 and ZP3) required for fertilization and early embryonic survival. Essential for oocytes to survive and form primordial follicles. The persistence of FIGLA in adult females suggests that it may regulate additional pathways that are essential for normal ovarian development. Binds to the E-box (5'-CANNTG-3') of the ZPs (ZP1, ZP2, ZP3) promoters. This is Factor in the germline alpha (Figla) from Mus musculus (Mouse).